A 730-amino-acid chain; its full sequence is Elongation factor 2 (730 aa).

Residues 19–260 (QRIRNIGIVA…MVIHFLPNPL (242 aa)) enclose the tr-type G domain. GTP contacts are provided by residues 28-35 (AHIDHGKT), 94-98 (DTPGH), and 148-151 (NKVD). His-596 is subject to Diphthamide.

This sequence belongs to the TRAFAC class translation factor GTPase superfamily. Classic translation factor GTPase family. EF-G/EF-2 subfamily.

It localises to the cytoplasm. Catalyzes the GTP-dependent ribosomal translocation step during translation elongation. During this step, the ribosome changes from the pre-translocational (PRE) to the post-translocational (POST) state as the newly formed A-site-bound peptidyl-tRNA and P-site-bound deacylated tRNA move to the P and E sites, respectively. Catalyzes the coordinated movement of the two tRNA molecules, the mRNA and conformational changes in the ribosome. This Methanosarcina mazei (strain ATCC BAA-159 / DSM 3647 / Goe1 / Go1 / JCM 11833 / OCM 88) (Methanosarcina frisia) protein is Elongation factor 2.